Here is a 271-residue protein sequence, read N- to C-terminus: Shikimate dehydrogenase (NADP(+)) (271 aa).

Residues 15-17 (SKS) and Thr62 contribute to the shikimate site. Lys66 acts as the Proton acceptor in catalysis. Glu78 provides a ligand contact to NADP(+). Asn87 and Asp103 together coordinate shikimate. Residues 127–131 (GAGGA), 151–156 (NRTQAK), and Met214 each bind NADP(+). Tyr216 contributes to the shikimate binding site. Gly238 is an NADP(+) binding site.

This sequence belongs to the shikimate dehydrogenase family. In terms of assembly, homodimer.

It carries out the reaction shikimate + NADP(+) = 3-dehydroshikimate + NADPH + H(+). The protein operates within metabolic intermediate biosynthesis; chorismate biosynthesis; chorismate from D-erythrose 4-phosphate and phosphoenolpyruvate: step 4/7. Its function is as follows. Involved in the biosynthesis of the chorismate, which leads to the biosynthesis of aromatic amino acids. Catalyzes the reversible NADPH linked reduction of 3-dehydroshikimate (DHSA) to yield shikimate (SA). The protein is Shikimate dehydrogenase (NADP(+)) of Shewanella pealeana (strain ATCC 700345 / ANG-SQ1).